Reading from the N-terminus, the 55-residue chain is Small ribosomal subunit protein eS31 (55 aa).

Zn(2+) contacts are provided by cysteine 26, cysteine 29, cysteine 44, and cysteine 47.

Belongs to the eukaryotic ribosomal protein eS31 family. Part of the 30S ribosomal subunit. The cofactor is Zn(2+).

This is Small ribosomal subunit protein eS31 from Archaeoglobus fulgidus (strain ATCC 49558 / DSM 4304 / JCM 9628 / NBRC 100126 / VC-16).